The chain runs to 1269 residues: Regulator of nonsense transcripts 2 (1269 aa).

Disordered regions lie at residues 1–125 (MPAE…EKEE) and 143–162 (LRSKNQNAPDNRPEENFFSR). Residues 57 to 133 (KKRLEEDKRK…EESLQLHQEA (77 aa)) adopt a coiled-coil conformation. A sufficient for interaction with UPF1 region spans residues 94-132 (KKKQEEEERKKQEEQAKRQQEEAAAQLKEKEESLQLHQE). Positions 168 to 396 (KKNTAFVKKL…KGELSEDRHK (229 aa)) constitute an MIF4G 1 domain. Disordered regions lie at residues 422 to 444 (NMPDLPQDKPTPEEHGPGIDIFT) and 487 to 518 (KSQNKDSNKDDSKEAKEPKDNKEASSPDDLEL). Composition is skewed to basic and acidic residues over residues 427–438 (PQDKPTPEEHGP) and 487–511 (KSQNKDSNKDDSKEAKEPKDNKEAS). 2 consecutive MIF4G domains span residues 571-755 (QQLP…YCNP) and 774-984 (RKLL…LRPK). Residues 709–926 (GRFLFRSPES…IRLVCTILDT (218 aa)) are sufficient for interaction with UPF3A and UPF3B. The tract at residues 755–1269 (PPPAEKTVRK…LIFKTGGRRR (515 aa)) is sufficient for interaction with EIF4A1 and EIF1. The segment at 837–857 (EDVGIHVVDGVLEDIRLGMEV) is binds to UPF3B. The segment at 1017–1090 (SKDSMTEGEN…KENETDEENA (74 aa)) is disordered. The segment covering 1025 to 1073 (ENLEEDEEEEEGGAETEEQSGNESEVNEPEEEEGSEEEEEGEEEEEENT) has biased composition (acidic residues). A sufficient for interaction with UPF1 C-terminus region spans residues 1081 to 1269 (KENETDEENA…LIFKTGGRRR (189 aa)). Phosphothreonine is present on T1085. Interaction with UPF1 stretches follow at residues 1102-1126 (VPCVEDEDFIQALDKMMLENLQQRS) and 1164-1204 (DTMP…AEQE). Residues 1102-1195 (VPCVEDEDFI…PMSSQLAANH (94 aa)) are necessary for interaction with UPF1. The disordered stretch occupies residues 1218 to 1269 (ERQEQEDYQEMLQSLAQRPAPANTNRERRPRYQHPKGAPNADLIFKTGGRRR).

As to quaternary structure, found in a post-splicing messenger ribonucleoprotein (mRNP) complex. Associates with the exon junction complex (EJC). Interacts with SMG1, EST1A, UPF3A, UPF3B, EIF4A1 and EIF1. Interacts with UPF1; interaction is promoted by TDRD6. Interacts with DDX4. In terms of tissue distribution, localized in male germ cells.

The protein localises to the cytoplasm. Its subcellular location is the perinuclear region. In terms of biological role, involved in nonsense-mediated decay (NMD) of mRNAs containing premature stop codons by associating with the nuclear exon junction complex (EJC). Recruited by UPF3B associated with the EJC core at the cytoplasmic side of the nuclear envelope and the subsequent formation of an UPF1-UPF2-UPF3 surveillance complex (including UPF1 bound to release factors at the stalled ribosome) is believed to activate NMD. In cooperation with UPF3B stimulates both ATPase and RNA helicase activities of UPF1. Binds spliced mRNA. In Mus musculus (Mouse), this protein is Regulator of nonsense transcripts 2.